The primary structure comprises 253 residues: tRNA pseudouridine synthase A (253 aa).

The Nucleophile role is filled by Asp-53. Tyr-111 contributes to the substrate binding site.

The protein belongs to the tRNA pseudouridine synthase TruA family. As to quaternary structure, homodimer.

The enzyme catalyses uridine(38/39/40) in tRNA = pseudouridine(38/39/40) in tRNA. Formation of pseudouridine at positions 38, 39 and 40 in the anticodon stem and loop of transfer RNAs. This chain is tRNA pseudouridine synthase A, found in Oceanobacillus iheyensis (strain DSM 14371 / CIP 107618 / JCM 11309 / KCTC 3954 / HTE831).